The primary structure comprises 184 residues: Probable chemoreceptor glutamine deamidase CheD (184 aa).

The protein belongs to the CheD family.

The catalysed reaction is L-glutaminyl-[protein] + H2O = L-glutamyl-[protein] + NH4(+). Probably deamidates glutamine residues to glutamate on methyl-accepting chemotaxis receptors (MCPs), playing an important role in chemotaxis. The protein is Probable chemoreceptor glutamine deamidase CheD of Rhizobium johnstonii (strain DSM 114642 / LMG 32736 / 3841) (Rhizobium leguminosarum bv. viciae).